A 378-amino-acid polypeptide reads, in one-letter code: TelA-like protein SAS1347 (378 aa).

It belongs to the TelA family.

The protein is TelA-like protein SAS1347 of Staphylococcus aureus (strain MSSA476).